Reading from the N-terminus, the 63-residue chain is MRCVPVFVILLLLIASTPSVDATQKTKDDMSLASFHDNAKRFLQTLRNTRSCCPEEITCCPWG.

A signal peptide spans Met-1–Ala-22. Residues Thr-23–Arg-50 constitute a propeptide that is removed on maturation. Trp-62 is modified (tryptophan amide).

The protein belongs to the conotoxin T superfamily. Contains 2 disulfide bonds that can be either 'C1-C3, C2-C4' or 'C1-C4, C2-C3', since these disulfide connectivities have been observed for conotoxins with cysteine framework V (for examples, see AC P0DQQ7 and AC P81755). Expressed by the venom duct.

The protein resides in the secreted. The protein is Conotoxin Pu5.4 of Conus pulicarius (Flea-bitten cone).